The sequence spans 305 residues: MEEKFRNCILGLAVGDALGMPVEGLSIENIRQLYGEVRDFLPSPYGDLNAGEWTDDTEQMVVLAESILETVYFDPENFAERLKRWFLETNSRRIGPSSTKAISNLMRGVHWTRAGVFSDTCGAAMRVAPIGLVYHFSLNLVERYAEISARVTHTGTAAIGGAVAVAVAIACNVLDFSDEEMLEEVLRRVEAYDNLLAEKIRYANEISDRDVEYAVEKLGNSISSLDVVPMAFYSYFAGKDFEESLIKAVNAGGDADSIAAICGAIKGAKGFAIPERWLEGLKDREFLEELATKLYELHMRIVKLT.

The protein belongs to the ADP-ribosylglycohydrolase family.

This is an uncharacterized protein from Archaeoglobus fulgidus (strain ATCC 49558 / DSM 4304 / JCM 9628 / NBRC 100126 / VC-16).